A 646-amino-acid polypeptide reads, in one-letter code: Cytochrome b translation regulator cbp8 (646 aa).

In terms of assembly, component of a complex, at least composed of cbp7 and cbp8.

It is found in the mitochondrion. In terms of biological role, translation factor for cob1/cytochrome b; plays a role in cob1 mRNA stabilization and required for correct folding of the protein. In Schizosaccharomyces pombe (strain 972 / ATCC 24843) (Fission yeast), this protein is Cytochrome b translation regulator cbp8.